Here is a 62-residue protein sequence, read N- to C-terminus: Temporin-1PLa (62 aa).

Positions 1-22 (MFTSKKSLLLLFFLGTINLSLC) are cleaved as a signal peptide. Residues 23 to 45 (EEERDADEEERRDDPDEMNVEVE) constitute a propeptide that is removed on maturation. Ile60 carries the isoleucine amide modification.

Expressed by the skin glands.

The protein localises to the secreted. Functionally, antimicrobial activity against the Gram-positive bacterium S.aureus. The protein is Temporin-1PLa of Lithobates palustris (Pickerel frog).